Reading from the N-terminus, the 80-residue chain is Conotoxin Pu11.1 (80 aa).

An N-terminal signal peptide occupies residues 1-19; that stretch reads MKLVLAIVLILMLLSLSTG. Positions 20–42 are excised as a propeptide; it reads AEMSDNHASRSATALTDRLLGPK. 4 disulfides stabilise this stretch: Cys46–Cys60, Cys53–Cys65, Cys59–Cys72, and Cys64–Cys79.

Belongs to the conotoxin I3 superfamily. In terms of tissue distribution, expressed by the venom duct.

The protein localises to the secreted. The polypeptide is Conotoxin Pu11.1 (Conus pulicarius (Flea-bitten cone)).